Here is a 276-residue protein sequence, read N- to C-terminus: Large ribosomal subunit protein uL2 (276 aa).

A disordered region spans residues asparagine 212–lysine 276. The span at tyrosine 257–lysine 276 shows a compositional bias: basic residues.

It belongs to the universal ribosomal protein uL2 family. Part of the 50S ribosomal subunit. Forms a bridge to the 30S subunit in the 70S ribosome.

One of the primary rRNA binding proteins. Required for association of the 30S and 50S subunits to form the 70S ribosome, for tRNA binding and peptide bond formation. It has been suggested to have peptidyltransferase activity; this is somewhat controversial. Makes several contacts with the 16S rRNA in the 70S ribosome. The sequence is that of Large ribosomal subunit protein uL2 from Helicobacter pylori (strain HPAG1).